Consider the following 364-residue polypeptide: L-carnitine dehydrogenase (364 aa).

11 to 16 (GGGVIG) is a binding site for NAD(+). A disordered region spans residues 336-364 (KPAASTAAEKAKASKPVKKAEKPKKKKKG). Over residues 348–364 (ASKPVKKAEKPKKKKKG) the composition is skewed to basic residues.

The protein belongs to the 3-hydroxyacyl-CoA dehydrogenase family. L-carnitine dehydrogenase subfamily. In terms of assembly, homodimer.

Its subcellular location is the cytoplasm. It catalyses the reaction carnitine + NAD(+) = 3-dehydrocarnitine + NADH + H(+). The protein operates within amine and polyamine metabolism; carnitine metabolism. Functionally, catalyzes the NAD(+)-dependent oxidation of L-carnitine to 3-dehydrocarnitine. This Mesorhizobium japonicum (strain LMG 29417 / CECT 9101 / MAFF 303099) (Mesorhizobium loti (strain MAFF 303099)) protein is L-carnitine dehydrogenase.